Reading from the N-terminus, the 254-residue chain is Phosphoglycerate mutase 1 (254 aa).

Substrate-binding positions include 10–17 and 23–24; these read RHGESAWN and SG. Catalysis depends on His11, which acts as the Tele-phosphohistidine intermediate. Residues Ser14 and Ser23 each carry the phosphoserine modification. Tyr26 carries the phosphotyrosine modification. Position 31 is a phosphoserine (Ser31). Substrate-binding positions include Arg62, 89-92, and Lys100; that span reads ERHY. The Proton donor/acceptor role is filled by Glu89. Lys106 carries the N6-acetyllysine modification. 116–117 serves as a coordination point for substrate; that stretch reads RR. Ser118 carries the phosphoserine modification. Residue 187 to 188 participates in substrate binding; the sequence is GN. Residue Lys251 is modified to N6-acetyllysine; alternate. Lys251 is modified (N6-succinyllysine; alternate). N6-acetyllysine is present on residues Lys253 and Lys254.

This sequence belongs to the phosphoglycerate mutase family. BPG-dependent PGAM subfamily. Homodimer. Acetylated at Lys-253, Lys-253 and Lys-254 under high glucose condition. Acetylation increases catalytic activity. Under glucose restriction SIRT1 levels dramatically increase and it deacetylates the enzyme. In terms of tissue distribution, expressed in the liver and brain. Not found in the muscle.

The catalysed reaction is (2R)-2-phosphoglycerate = (2R)-3-phosphoglycerate. The enzyme catalyses (2R)-3-phospho-glyceroyl phosphate = (2R)-2,3-bisphosphoglycerate + H(+). Catalyzes the interconversion of 2-phosphoglycerate and 3-phosphoglyceratea crucial step in glycolysis, by using 2,3-bisphosphoglycerate. Also catalyzes the interconversion of (2R)-2,3-bisphosphoglycerate and (2R)-3-phospho-glyceroyl phosphate. In Homo sapiens (Human), this protein is Phosphoglycerate mutase 1.